The following is a 75-amino-acid chain: Exodeoxyribonuclease 7 small subunit (75 aa).

Belongs to the XseB family. As to quaternary structure, heterooligomer composed of large and small subunits.

It is found in the cytoplasm. The enzyme catalyses Exonucleolytic cleavage in either 5'- to 3'- or 3'- to 5'-direction to yield nucleoside 5'-phosphates.. Functionally, bidirectionally degrades single-stranded DNA into large acid-insoluble oligonucleotides, which are then degraded further into small acid-soluble oligonucleotides. In Chlamydia pneumoniae (Chlamydophila pneumoniae), this protein is Exodeoxyribonuclease 7 small subunit.